The primary structure comprises 246 residues: Carboxylesterase (246 aa).

Serine 93 serves as the catalytic Nucleophile. Residues aspartate 192 and histidine 222 each act as charge relay system in the active site.

This sequence belongs to the lipase/esterase LIP3/BchO family. In terms of assembly, homodimer.

It carries out the reaction a carboxylic ester + H2O = an alcohol + a carboxylate + H(+). Functionally, involved in the detoxification of xenobiotics. Shows maximal activity with C6 substrates, with gradually decreasing activity from C8 to C12 substrates. No activity for higher chain length substrates acids rather than long-chain ones. This Geobacillus stearothermophilus (Bacillus stearothermophilus) protein is Carboxylesterase (est).